Consider the following 491-residue polypeptide: Cytosolic Fe-S cluster assembly factor NAR1 (491 aa).

[4Fe-4S] cluster is bound by residues Cys20, Cys65, Cys68, Cys71, Cys177, Cys232, Cys414, and Cys418.

It belongs to the NARF family.

In terms of biological role, component of the cytosolic Fe/S protein assembly machinery. Required for maturation of extramitochondrial Fe/S proteins. May play a role in the transfer of pre-assembled Fe/S clusters to target apoproteins. This chain is Cytosolic Fe-S cluster assembly factor NAR1 (NAR1), found in Yarrowia lipolytica (strain CLIB 122 / E 150) (Yeast).